The sequence spans 77 residues: Large ribosomal subunit protein bL28 (77 aa).

Positions 1–25 (MARVCQVTGKAPMSGNNVSHANNKT) are disordered.

Belongs to the bacterial ribosomal protein bL28 family.

The protein is Large ribosomal subunit protein bL28 of Paraburkholderia xenovorans (strain LB400).